A 353-amino-acid polypeptide reads, in one-letter code: MRVAVGMSGGVDSSVAALLLKEKGYDVIGVTLKLSSIVCSNDIQVCCSPQDIKDAKRVASYLGIEHYVIDWEDIFREKVINYFVEEYKKGKTPNPCSVCNREVKTGRLAKFVNIVLGADKFATGHYIKIEDHPVYGKVIKRGSDIKKDQSYFMALLERDVLDLLIFPLSDLTKEEVRKIAEDYKIPVSQKKESFEICFTAGKTPAEYLLENNLLAFESGDIVHIDGKTVGKHKGLPFYTVGQRRGLGVRWREPLYVIEKDAERNTVVVGEREKLLTDHVSSEDFNFLVPVEKWKKEGLSVQGRYRQKAVKIKDVSIEGNRLTAYFEKPEERFAKGQVLAVYDGDILLGGGIIV.

ATP-binding positions include Gly6–Ser13 and Leu32. Cys99 acts as the Nucleophile in catalysis. An intrachain disulfide couples Cys99 to Cys197. Position 124 (Gly124) interacts with ATP. The interaction with tRNA stretch occupies residues Lys147–Gln149. The Cysteine persulfide intermediate role is filled by Cys197. The segment at Arg303–Tyr304 is interaction with tRNA.

It belongs to the MnmA/TRMU family.

The protein resides in the cytoplasm. The enzyme catalyses S-sulfanyl-L-cysteinyl-[protein] + uridine(34) in tRNA + AH2 + ATP = 2-thiouridine(34) in tRNA + L-cysteinyl-[protein] + A + AMP + diphosphate + H(+). Functionally, catalyzes the 2-thiolation of uridine at the wobble position (U34) of tRNA, leading to the formation of s(2)U34. The chain is tRNA-specific 2-thiouridylase MnmA from Persephonella marina (strain DSM 14350 / EX-H1).